The following is a 982-amino-acid chain: Glycine dehydrogenase (decarboxylating) (982 aa).

At Lys-721 the chain carries N6-(pyridoxal phosphate)lysine.

It belongs to the GcvP family. In terms of assembly, the glycine cleavage system is composed of four proteins: P, T, L and H. The cofactor is pyridoxal 5'-phosphate.

It carries out the reaction N(6)-[(R)-lipoyl]-L-lysyl-[glycine-cleavage complex H protein] + glycine + H(+) = N(6)-[(R)-S(8)-aminomethyldihydrolipoyl]-L-lysyl-[glycine-cleavage complex H protein] + CO2. Functionally, the glycine cleavage system catalyzes the degradation of glycine. The P protein binds the alpha-amino group of glycine through its pyridoxal phosphate cofactor; CO(2) is released and the remaining methylamine moiety is then transferred to the lipoamide cofactor of the H protein. The sequence is that of Glycine dehydrogenase (decarboxylating) from Prochlorococcus marinus (strain MIT 9303).